A 132-amino-acid polypeptide reads, in one-letter code: Protein NrdI (132 aa).

This sequence belongs to the NrdI family.

Probably involved in ribonucleotide reductase function. The sequence is that of Protein NrdI from Staphylococcus epidermidis (strain ATCC 35984 / DSM 28319 / BCRC 17069 / CCUG 31568 / BM 3577 / RP62A).